We begin with the raw amino-acid sequence, 472 residues long: ATP synthase subunit beta (472 aa).

157–164 provides a ligand contact to ATP; it reads GGAGVGKT.

Belongs to the ATPase alpha/beta chains family. F-type ATPases have 2 components, CF(1) - the catalytic core - and CF(0) - the membrane proton channel. CF(1) has five subunits: alpha(3), beta(3), gamma(1), delta(1), epsilon(1). CF(0) has three main subunits: a(1), b(2) and c(9-12). The alpha and beta chains form an alternating ring which encloses part of the gamma chain. CF(1) is attached to CF(0) by a central stalk formed by the gamma and epsilon chains, while a peripheral stalk is formed by the delta and b chains.

The protein resides in the cell inner membrane. The catalysed reaction is ATP + H2O + 4 H(+)(in) = ADP + phosphate + 5 H(+)(out). Produces ATP from ADP in the presence of a proton gradient across the membrane. The catalytic sites are hosted primarily by the beta subunits. The chain is ATP synthase subunit beta from Desulfatibacillum aliphaticivorans.